Consider the following 250-residue polypeptide: Gamma-secretase subunit APH1-like (250 aa).

Helical transmembrane passes span 5 to 25 (AGIG…VSVI), 29 to 49 (PFLI…LIIL), 57 to 77 (LPLK…SVCF), 116 to 136 (IALA…CLSL), 157 to 177 (FLIS…SMVI), 191 to 211 (IIVP…FASE), and 212 to 232 (GCVI…VHCG).

It belongs to the APH-1 family. Probable component of the gamma-secretase complex, a complex composed of a presenilin homodimer, nicastrin, APH1 and PEN2.

It localises to the membrane. Functionally, probable subunit of the gamma-secretase complex, an endoprotease complex that catalyzes the intramembrane cleavage of integral proteins such as Notch receptors. This Arabidopsis thaliana (Mouse-ear cress) protein is Gamma-secretase subunit APH1-like.